Consider the following 715-residue polypeptide: Fatty acid oxidation complex subunit alpha (715 aa).

The interval 1 to 190 is enoyl-CoA hydratase/isomerase; it reads MIYEGKAITV…KVGAVDAVVA (190 aa). A substrate-binding site is contributed by D297. The tract at residues 312 to 715 is 3-hydroxyacyl-CoA dehydrogenase; it reads HDVKQAAVLG…MAKNGQRFFN (404 aa). NAD(+) is bound by residues M325, D344, 401 to 403, K408, and S430; that span reads VVE. H451 serves as the catalytic For 3-hydroxyacyl-CoA dehydrogenase activity. N454 lines the NAD(+) pocket. N501 and Y660 together coordinate substrate.

It in the N-terminal section; belongs to the enoyl-CoA hydratase/isomerase family. This sequence in the C-terminal section; belongs to the 3-hydroxyacyl-CoA dehydrogenase family. As to quaternary structure, heterotetramer of two alpha chains (FadB) and two beta chains (FadA).

It carries out the reaction a (3S)-3-hydroxyacyl-CoA + NAD(+) = a 3-oxoacyl-CoA + NADH + H(+). It catalyses the reaction a (3S)-3-hydroxyacyl-CoA = a (2E)-enoyl-CoA + H2O. The enzyme catalyses a 4-saturated-(3S)-3-hydroxyacyl-CoA = a (3E)-enoyl-CoA + H2O. The catalysed reaction is (3S)-3-hydroxybutanoyl-CoA = (3R)-3-hydroxybutanoyl-CoA. It carries out the reaction a (3Z)-enoyl-CoA = a 4-saturated (2E)-enoyl-CoA. It catalyses the reaction a (3E)-enoyl-CoA = a 4-saturated (2E)-enoyl-CoA. It participates in lipid metabolism; fatty acid beta-oxidation. Its function is as follows. Involved in the aerobic and anaerobic degradation of long-chain fatty acids via beta-oxidation cycle. Catalyzes the formation of 3-oxoacyl-CoA from enoyl-CoA via L-3-hydroxyacyl-CoA. It can also use D-3-hydroxyacyl-CoA and cis-3-enoyl-CoA as substrate. In Pseudomonas putida (strain ATCC 47054 / DSM 6125 / CFBP 8728 / NCIMB 11950 / KT2440), this protein is Fatty acid oxidation complex subunit alpha.